We begin with the raw amino-acid sequence, 367 residues long: MKILFIGSRLYDDIDYYVRENGIESIITESNEDAINLDLPDQVFIVPRGMDSPKQIAISQNVDAVVPLIGIDPPLIEVAKMKEELEAETDIPVIAANVRAVRLTSDKIKTKEFYNEIGVPTPQYQILAKDDFESKLKMEFPVVLKQGQGQGGKDIKVAESLDDVKEYFEEFDHALCEKFIEGSEISIEVLGYNGEYVPLSPIYKGETTLEGIHPLNKIKTAPCLVEGLDNNLVQRTAYKVAKNLGSDGIFEMDFMFSKDEQQLYAIEVNTRPNGTRYLTTATCGVNSLCELVNMAAGKFSIKDIQDKLEYYYATEIPIGRYKGPDLNEPLKSFKNNDWVVHGPEGYQRITIRADSKEQLDRYVEDLI.

The ATP-grasp domain maps to 111-296 (KEFYNEIGVP…SLCELVNMAA (186 aa)). 137–186 (KMEFPVVLKQGQGQGGKDIKVAESLDDVKEYFEEFDHALCEKFIEGSEIS) is a binding site for ATP. The Mg(2+) site is built by Asp-253, Glu-267, and Asn-269. 3 residues coordinate Mn(2+): Asp-253, Glu-267, and Asn-269.

The protein belongs to the small carbamoyl-phosphate synthase family. Forms homodimers and homotetramers (dimers of dimers). The cofactor is Mg(2+). It depends on Mn(2+) as a cofactor.

The catalysed reaction is hydrogencarbonate + NH4(+) + 2 ATP = carbamoyl phosphate + 2 ADP + phosphate + 2 H(+). In terms of biological role, catalyzes the synthesis of carbamoyl phosphate from ATP, ammonium and bicarbonate. Proceeds via a three-step mechanism, i.e. the phosphorylation of hydrogencarbonate to carboxyphosphate, a nucleophilic attack of ammonia on carboxyphosphate yielding carbamate, and the phosphorylation of carbamate forming carbamoyl phosphate. In M.smithii, the predominant archaeon in the human gut, one function of this enzyme may be to sequester ammonia, a scarce nutrient in the intestine which is the major source of nitrogen in M.smithii for the biosynthesis of nucleotides, amino acids, and many other metabolites. The protein is Carbamoyl-phosphate synthase of Methanobrevibacter smithii (strain ATCC 35061 / DSM 861 / OCM 144 / PS).